The sequence spans 547 residues: CAP-Gly domain-containing linker protein 3 (547 aa).

The disordered stretch occupies residues 1–49; it reads MTKTDPAPMAPPPRGEEEEEEEEDEPVPEAPSPTQERRQKPVVHPSAPA. Positions 16–27 are enriched in acidic residues; it reads EEEEEEEEDEPV. ANK repeat units follow at residues 117–155, 160–189, and 197–226; these read TDMT…DVTL, TNMN…PRVV, and NHGS…NPAL. One can recognise a CAP-Gly 1 domain in the interval 314–356; it reads GTTEFASGQWVGVELDEPEGKNDGSVGGVRYFICPPKQGLFAS. Positions 365-413 are disordered; the sequence is DAPPSSVTSTPRTPRMDFSRVTGKGRREHKGKKKTPSSPSLGSLQQRDR. The span at 367 to 377 shows a compositional bias: low complexity; it reads PPSSVTSTPRT. Threonine 374 carries the post-translational modification Phosphothreonine. A compositionally biased stretch (basic residues) spans 387-399; the sequence is GKGRREHKGKKKT. Residues 400–409 are compositionally biased toward polar residues; it reads PSSPSLGSLQ. Phosphoserine is present on serine 401. Positions 436 to 478 constitute a CAP-Gly 2 domain; that stretch reads GKTDFAPGYWYGIELDQPTGKHDGSVFGVRYFTCPPRHGVFAP. A goLD region spans residues 488 to 547; sequence STDSPGDSVGAKKVHQVTMTQPKRTFTTVRTPKDIASENSISRLLFCCWFPWMLRAEMQS. Residues cysteine 534 and cysteine 535 are each lipidated (S-palmitoyl cysteine).

In terms of assembly, homodimer. Interacts with AKT1 and AKT2; when AKT1 and AKT2 are phosphorylated and activated, affinity is higher for AKT2. Interacts with ZDHHC13 (via ANK repeats). Interacts with ZDHHC17 (via ANK repeats). Palmitoylation by ZDHHC17 regulates association with the plasma membrane.

The protein localises to the cell membrane. Its subcellular location is the cytoplasm. It localises to the golgi apparatus. The protein resides in the golgi stack. Functionally, functions as a cytoplasmic linker protein. Involved in TGN-endosome dynamics. May modulate the cellular compartmentalization of AKT kinase family and promote its cell membrane localization, thereby playing a role in glucose transport in adipocytes. In Pongo abelii (Sumatran orangutan), this protein is CAP-Gly domain-containing linker protein 3 (CLIP3).